A 314-amino-acid polypeptide reads, in one-letter code: Lipoyl synthase (314 aa).

Positions 1–24 (MMDTPIIRHPEKVRRPDNPSPRKP) are disordered. C53, C58, C64, C79, C83, C86, and S293 together coordinate [4Fe-4S] cluster. Positions 65–282 (WKRRHATFMI…ADIARGKGFL (218 aa)) constitute a Radical SAM core domain. Residues 294–308 (HHADRDFEDLRKARQ) are compositionally biased toward basic and acidic residues. Positions 294–314 (HHADRDFEDLRKARQDAAATK) are disordered.

The protein belongs to the radical SAM superfamily. Lipoyl synthase family. [4Fe-4S] cluster serves as cofactor.

Its subcellular location is the cytoplasm. The enzyme catalyses [[Fe-S] cluster scaffold protein carrying a second [4Fe-4S](2+) cluster] + N(6)-octanoyl-L-lysyl-[protein] + 2 oxidized [2Fe-2S]-[ferredoxin] + 2 S-adenosyl-L-methionine + 4 H(+) = [[Fe-S] cluster scaffold protein] + N(6)-[(R)-dihydrolipoyl]-L-lysyl-[protein] + 4 Fe(3+) + 2 hydrogen sulfide + 2 5'-deoxyadenosine + 2 L-methionine + 2 reduced [2Fe-2S]-[ferredoxin]. It participates in protein modification; protein lipoylation via endogenous pathway; protein N(6)-(lipoyl)lysine from octanoyl-[acyl-carrier-protein]: step 2/2. Catalyzes the radical-mediated insertion of two sulfur atoms into the C-6 and C-8 positions of the octanoyl moiety bound to the lipoyl domains of lipoate-dependent enzymes, thereby converting the octanoylated domains into lipoylated derivatives. This chain is Lipoyl synthase, found in Rhodospirillum rubrum (strain ATCC 11170 / ATH 1.1.1 / DSM 467 / LMG 4362 / NCIMB 8255 / S1).